The following is a 145-amino-acid chain: MASKSSITHLLLAAVLVSVFAAAAATGPYCYPGMGLPSNPLEGCREYVAQQTCGVGIVGSPVSTEPGNTPRDRCCKELYDASQHCRCEAVRYFIGRTSDPNSGVLKDLPGCPREPQRDFAKVLVTPGHCNVMTVHNTPYCLGLDI.

An N-terminal signal peptide occupies residues 1–25 (MASKSSITHLLLAAVLVSVFAAAAA).

Belongs to the protease inhibitor I6 (cereal trypsin/alpha-amylase inhibitor) family. In terms of tissue distribution, developing endosperm.

It localises to the secreted. Functionally, alpha-amylase/trypsin inhibitor. It could be involved in insect defense mechanisms. The sequence is that of Alpha-amylase/trypsin inhibitor CM2 from Triticum aestivum (Wheat).